Reading from the N-terminus, the 404-residue chain is tRNA (carboxymethyluridine(34)-5-O)-methyltransferase (404 aa).

A Phosphoserine modification is found at S238.

As to quaternary structure, interacts with TRM112A and TRM112B.

It catalyses the reaction 5-(carboxymethyl)uridine(34) in tRNA + S-adenosyl-L-methionine = 5-(2-methoxy-2-oxoethyl)uridine(34) in tRNA + S-adenosyl-L-homocysteine. Its function is as follows. Catalyzes the methylation of 5-carboxymethyl uridine to 5-methylcarboxymethyl uridine at the wobble position of the anticodon loop in tRNA via its methyltransferase domain. Catalyzes the last step in the formation of 5-methylcarboxymethyl uridine at the wobble position of the anticodon loop in target tRNA. This Arabidopsis thaliana (Mouse-ear cress) protein is tRNA (carboxymethyluridine(34)-5-O)-methyltransferase.